Consider the following 319-residue polypeptide: Lipopolysaccharide heptosyltransferase 1 (319 aa).

ADP-L-glycero-beta-D-manno-heptose is bound by residues Thr-187, Thr-188, Lys-192, Glu-222, Met-242, Asp-261, Thr-262, Gly-263, and His-266.

This sequence belongs to the glycosyltransferase 9 family.

The protein resides in the cell inner membrane. It catalyses the reaction an alpha-Kdo-(2-&gt;4)-alpha-Kdo-(2-&gt;6)-lipid A + ADP-L-glycero-beta-D-manno-heptose = an L-alpha-D-Hep-(1-&gt;5)-[alpha-Kdo-(2-&gt;4)]-alpha-Kdo-(2-&gt;6)-lipid A + ADP + H(+). The enzyme catalyses alpha-Kdo-(2-&gt;4)-alpha-Kdo-(2-&gt;6)-lipid A (E. coli) + ADP-L-glycero-beta-D-manno-heptose = L-alpha-D-Hep-(1-&gt;5)-[alpha-Kdo-(2-&gt;4)]-alpha-Kdo-(2-&gt;6)-lipid A (E. coli) + ADP + H(+). The protein operates within bacterial outer membrane biogenesis; LPS core biosynthesis. Glycosyltransferase involved in the biosynthesis of the core oligosaccharide region of lipopolysaccharide (LPS). Catalyzes the addition of the first heptose unit to one 3-deoxy-D-manno-octulosonic acid (Kdo) residue of the Kdo2-lipid A module. The analog ADP-mannose can serve as an alternative donor in place of ADP-L-glycero-D-manno-heptose for the glycosylation of Kdo2-lipid A. Displays no activity with ADP-glucose, GDP-mannose, UDP-glucose or UDP-galactose. This Escherichia coli (strain K12) protein is Lipopolysaccharide heptosyltransferase 1.